Reading from the N-terminus, the 486-residue chain is Histamine H1 receptor (486 aa).

The Extracellular portion of the chain corresponds to 1 to 29 (MSFANTSSTFEDKMCEGNRTAMASPQLLP). N-linked (GlcNAc...) asparagine glycans are attached at residues Asn-5 and Asn-18. Residues 30 to 50 (LVVVLSSISLVTVGLNLLVLY) form a helical membrane-spanning segment. Residues 51–64 (AVHSERKLHTVGNL) are Cytoplasmic-facing. The helical transmembrane segment at 65–89 (YIVSLSVADLIVGAVVMPMNILYLI) threads the bilayer. At 90-97 (MTKWSLGR) the chain is on the extracellular side. The helical transmembrane segment at 98-123 (PLCLFWLSMDYVASTASIFSVFILCI) threads the bilayer. The cysteines at positions 100 and 180 are disulfide-linked. The histamine site is built by Asp-107 and Thr-112. Residues 107 to 112 (DYVAST) are important for agonist binding. At 124–144 (DRYRSVQQPLRYLRYRTKTRA) the chain is on the cytoplasmic side. Phosphothreonine occurs at positions 140 and 142. The chain crosses the membrane as a helical span at residues 145–164 (SATILGAWFFSFLWVIPILG). The Extracellular portion of the chain corresponds to 165–188 (WHHFMPPAPELREDKCETDFYNVT). A helical membrane pass occupies residues 189–211 (WFKIMTAIINFYLPTLLMLWFYV). Position 198 (Asn-198) interacts with histamine. Topologically, residues 212–415 (KIYKAVRRHC…LNRERKAAKQ (204 aa)) are cytoplasmic. Ser-230 is subject to Phosphoserine. A compositionally biased stretch (basic and acidic residues) spans 241–253 (SDDTKEGAKKPGR). Disordered stretches follow at residues 241–295 (SDDT…GERE) and 310–379 (VAEG…RSGS). A phosphoserine mark is found at Ser-342 and Ser-345. Over residues 347–365 (DQTLVDQQSFSRTTDSDTS) the composition is skewed to polar residues. Residues Ser-379, Ser-381, Ser-395, and Ser-397 each carry the phosphoserine modification. The chain crosses the membrane as a helical span at residues 416–439 (LGFIMAAFILCWIPYFIFFMVIAF). The segment at 423–427 (FILCW) is important for agonist binding. Tyr-430 is a binding site for histamine. A disulfide bridge connects residues Cys-440 and Cys-443. The Extracellular segment spans residues 440 to 445 (CKSCCS). Residues 446-468 (EPMHMFTIWLGYINSTLNPLIYP) form a helical membrane-spanning segment. Residues 469-486 (LCNENFKKTFKKILHIRS) lie on the Cytoplasmic side of the membrane.

Belongs to the G-protein coupled receptor 1 family. In terms of processing, phosphorylation at sites in the second and third cytoplasmic loops independently contribute to agonist-induced receptor down-regulation.

It is found in the cell membrane. In terms of biological role, G-protein-coupled receptor for histamine, a biogenic amine that functions as an immune modulator and a neurotransmitter. Through the H1 receptor, histamine mediates the contraction of smooth muscles and increases capillary permeability due to contraction of terminal venules. Also mediates neurotransmission in the central nervous system and thereby regulates circadian rhythms, emotional and locomotor activities as well as cognitive functions. The chain is Histamine H1 receptor from Rattus norvegicus (Rat).